Reading from the N-terminus, the 139-residue chain is Ribosomal RNA large subunit methyltransferase H (139 aa).

Residues leucine 56, glycine 88, and 107 to 112 (LSLMTF) contribute to the S-adenosyl-L-methionine site.

Belongs to the RNA methyltransferase RlmH family. As to quaternary structure, homodimer.

The protein localises to the cytoplasm. It carries out the reaction pseudouridine(1915) in 23S rRNA + S-adenosyl-L-methionine = N(3)-methylpseudouridine(1915) in 23S rRNA + S-adenosyl-L-homocysteine + H(+). Specifically methylates the pseudouridine at position 1915 (m3Psi1915) in 23S rRNA. The chain is Ribosomal RNA large subunit methyltransferase H from Coprothermobacter proteolyticus (strain ATCC 35245 / DSM 5265 / OCM 4 / BT).